Consider the following 156-residue polypeptide: Transcription elongation factor GreA (156 aa).

Residues 2 to 27 (EKTFPMTKEGLDKLKAELENLKLVKR) are a coiled coil.

It belongs to the GreA/GreB family.

Necessary for efficient RNA polymerase transcription elongation past template-encoded arresting sites. The arresting sites in DNA have the property of trapping a certain fraction of elongating RNA polymerases that pass through, resulting in locked ternary complexes. Cleavage of the nascent transcript by cleavage factors such as GreA or GreB allows the resumption of elongation from the new 3'terminus. GreA releases sequences of 2 to 3 nucleotides. This is Transcription elongation factor GreA from Lactococcus lactis subsp. cremoris (strain SK11).